The chain runs to 142 residues: Large ribosomal subunit protein mL42 (142 aa).

The transit peptide at 1–32 directs the protein to the mitochondrion; that stretch reads MALAAVKWAISSRTMLKHLFPVENGALYCVGH.

The protein belongs to the mitochondrion-specific ribosomal protein mL42 family. Component of the mitochondrial ribosome large subunit (39S) which comprises a 16S rRNA and about 50 distinct proteins. Component of the mitochondrial ribosome small subunit (28S) which comprises a 12S rRNA and about 30 distinct proteins.

It localises to the mitochondrion. This is Large ribosomal subunit protein mL42 (MRPL42) from Bos taurus (Bovine).